The following is a 152-amino-acid chain: Cell division protein SepF (152 aa).

Belongs to the SepF family. As to quaternary structure, homodimer. Interacts with FtsZ.

Its subcellular location is the cytoplasm. Functionally, cell division protein that is part of the divisome complex and is recruited early to the Z-ring. Probably stimulates Z-ring formation, perhaps through the cross-linking of FtsZ protofilaments. Its function overlaps with FtsA. This Clostridioides difficile (strain 630) (Peptoclostridium difficile) protein is Cell division protein SepF.